Consider the following 337-residue polypeptide: uncharacterized protein (337 aa).

29–36 (GPKSSGKS) serves as a coordination point for ATP.

This sequence belongs to the archaeal ATPase family.

This is an uncharacterized protein from Methanocaldococcus jannaschii (strain ATCC 43067 / DSM 2661 / JAL-1 / JCM 10045 / NBRC 100440) (Methanococcus jannaschii).